The primary structure comprises 179 residues: NADH dehydrogenase [ubiquinone] 1 beta subcomplex subunit 9 (179 aa).

A2 is modified (N-acetylalanine). Residue S85 is modified to Phosphoserine. Residues E136–D162 are disordered.

Belongs to the complex I LYR family. Mammalian complex I is composed of 45 different subunits.

Its subcellular location is the mitochondrion inner membrane. Accessory subunit of the mitochondrial membrane respiratory chain NADH dehydrogenase (Complex I), that is believed to be not involved in catalysis. Complex I functions in the transfer of electrons from NADH to the respiratory chain. The immediate electron acceptor for the enzyme is believed to be ubiquinone. The chain is NADH dehydrogenase [ubiquinone] 1 beta subcomplex subunit 9 (NDUFB9) from Homo sapiens (Human).